We begin with the raw amino-acid sequence, 331 residues long: MARLYYDADANLDLLANKTVAIIGYGSQGHAHALNLKDSGVQVIVGLYEGSKSAAKAQEAGLTVKSAADAAKAADLIMILLPDEVQRTVYTQDIQPHLSADKVLAFAHGFNIHFAQVVPPSDVDVVMVAPKGPGHLVRRTYTQGQGVPCLFAVYQDASGQARDRAMAYAKGIGGTRAGILETTFREETETDLFGEQAVLCGGLTALIKAGFETLVEAGYQPELAYFECMHEVKLIVDLIVEGGLAKMRDSISNTAEYGDYTRGPRIVDDRTKAEMRRVLHEIQTGQFAKEFVLENMSGKAGFTATRRRESEHAIEEVGKDLRAMFSWTDKA.

The 181-residue stretch at 2–182 folds into the KARI N-terminal Rossmann domain; that stretch reads ARLYYDADAN…GGTRAGILET (181 aa). Residues 25–28, Ser51, Ser53, and 83–86 each bind NADP(+); these read YGSQ and DEVQ. His108 is an active-site residue. Gly134 provides a ligand contact to NADP(+). Residues 183–328 form the KARI C-terminal knotted domain; it reads TFREETETDL…KDLRAMFSWT (146 aa). Mg(2+) contacts are provided by Asp191, Glu195, Glu227, and Glu231. Ser252 serves as a coordination point for substrate.

Belongs to the ketol-acid reductoisomerase family. The cofactor is Mg(2+).

It carries out the reaction (2R)-2,3-dihydroxy-3-methylbutanoate + NADP(+) = (2S)-2-acetolactate + NADPH + H(+). It catalyses the reaction (2R,3R)-2,3-dihydroxy-3-methylpentanoate + NADP(+) = (S)-2-ethyl-2-hydroxy-3-oxobutanoate + NADPH + H(+). It functions in the pathway amino-acid biosynthesis; L-isoleucine biosynthesis; L-isoleucine from 2-oxobutanoate: step 2/4. The protein operates within amino-acid biosynthesis; L-valine biosynthesis; L-valine from pyruvate: step 2/4. In terms of biological role, involved in the biosynthesis of branched-chain amino acids (BCAA). Catalyzes an alkyl-migration followed by a ketol-acid reduction of (S)-2-acetolactate (S2AL) to yield (R)-2,3-dihydroxy-isovalerate. In the isomerase reaction, S2AL is rearranged via a Mg-dependent methyl migration to produce 3-hydroxy-3-methyl-2-ketobutyrate (HMKB). In the reductase reaction, this 2-ketoacid undergoes a metal-dependent reduction by NADPH to yield (R)-2,3-dihydroxy-isovalerate. The sequence is that of Ketol-acid reductoisomerase (NADP(+)) from Acaryochloris marina (strain MBIC 11017).